We begin with the raw amino-acid sequence, 317 residues long: Ribosomal RNA small subunit methyltransferase H (317 aa).

S-adenosyl-L-methionine contacts are provided by residues 39 to 41, aspartate 59, phenylalanine 83, aspartate 104, and glutamine 111; that span reads GGH.

It belongs to the methyltransferase superfamily. RsmH family.

The protein localises to the cytoplasm. The enzyme catalyses cytidine(1402) in 16S rRNA + S-adenosyl-L-methionine = N(4)-methylcytidine(1402) in 16S rRNA + S-adenosyl-L-homocysteine + H(+). In terms of biological role, specifically methylates the N4 position of cytidine in position 1402 (C1402) of 16S rRNA. This Paraburkholderia phytofirmans (strain DSM 17436 / LMG 22146 / PsJN) (Burkholderia phytofirmans) protein is Ribosomal RNA small subunit methyltransferase H.